A 234-amino-acid polypeptide reads, in one-letter code: Inner membrane protein YbhL (234 aa).

Residues 1–23 (MDRFPRSDSIVQPRAGLQTYMAQ) are Periplasmic-facing. A helical membrane pass occupies residues 24 to 44 (VYGWMTVGLLLTAFVAWYAAN). At 45 to 56 (SAAVMELLFTNR) the chain is on the cytoplasmic side. A helical transmembrane segment spans residues 57-77 (VFLIGLIIAQLALVIVLSAMI). Over 78 to 79 (QK) the chain is Periplasmic. The chain crosses the membrane as a helical span at residues 80–100 (LSAGVTTMLFMLYSALTGLTL). Over 101-102 (SS) the chain is Cytoplasmic. A helical transmembrane segment spans residues 103–123 (IFIVYTAASIASTFVVTAGMF). At 124–136 (GAMSLYGYTTKRD) the chain is on the periplasmic side. The helical transmembrane segment at 137–157 (LSGFGNMLFMALIGIVLASLV) threads the bilayer. Residues 158 to 163 (NFWLKS) are Cytoplasmic-facing. The chain crosses the membrane as a helical span at residues 164-184 (EALMWAVTYIGVIVFVGLTAY). Residues 185 to 206 (DTQKLKNMGEQIDTRDTSNLRK) are Periplasmic-facing. A helical transmembrane segment spans residues 207–227 (YSILGALTLYLDFINLFLMLL). Residues 228 to 234 (RIFGNRR) lie on the Cytoplasmic side of the membrane.

Belongs to the BI1 family.

Its subcellular location is the cell inner membrane. The chain is Inner membrane protein YbhL (ybhL) from Escherichia coli (strain K12).